The chain runs to 601 residues: 66 kDa stress protein (601 aa).

WD repeat units follow at residues 56–95 (EHAQPATVAKYAPSGFYIASGDLSGTLRIWDTTQLEHPLK), 100–143 (VLSG…GEIT), 145–184 (HSKAIASCDFKATRPFRVITGAEDFQANWFEGPPFKFKHA), 187–226 (EHTRFLTCVRFSPDGEKVLTVGLDKKGFILDGKTGEKVGA), 233–272 (AHALGIYSCSWSPDSKKVLTVSADKSAKIWDDKGTLLTTF), 318–357 (GHNKLVTSLAFDTASKALYSGSYDGVILQWNLETGIAVPI), 435–478 (ASTT…LSEQ), 483–522 (GHRGFLTAIAYSPDGKHFASADQNRDIFVWDKASRKIKVE), 526–565 (YHNARVTSLAWNSNSNNIVTGSLDSHVYVWSVSEPSKHIA), and 569–600 (AHRGGVNAVLWVDEHTVASAGLDCSIKTWTIK).

It belongs to the WD repeat AIP1 family.

Its function is as follows. Associated with the process of cyst formation. The sequence is that of 66 kDa stress protein from Physarum polycephalum (Slime mold).